Reading from the N-terminus, the 588-residue chain is L-fucose isomerase (588 aa).

Residues Glu-335 and Asp-359 each act as proton acceptor in the active site. Residues Glu-335, Asp-359, and His-525 each coordinate Mn(2+).

This sequence belongs to the L-fucose isomerase family. The cofactor is Mn(2+).

It localises to the cytoplasm. It carries out the reaction L-fucose = L-fuculose. Its pathway is carbohydrate degradation; L-fucose degradation; L-lactaldehyde and glycerone phosphate from L-fucose: step 1/3. Its function is as follows. Converts the aldose L-fucose into the corresponding ketose L-fuculose. In Streptococcus pneumoniae (strain Taiwan19F-14), this protein is L-fucose isomerase.